The primary structure comprises 86 residues: Small ribosomal subunit protein uS17 (86 aa).

It belongs to the universal ribosomal protein uS17 family. Part of the 30S ribosomal subunit.

In terms of biological role, one of the primary rRNA binding proteins, it binds specifically to the 5'-end of 16S ribosomal RNA. The polypeptide is Small ribosomal subunit protein uS17 (Desulfitobacterium hafniense (strain DSM 10664 / DCB-2)).